A 406-amino-acid chain; its full sequence is MNETPKPNSFRSGPDEDGRFGIYGGRFVAETLMPLILDLQDEWNKAKNDPAFQAELKHLGAHYIGRPSPLYFAERLTAELGGAKIYFKREELNHTGSHKINNCIGQILLAKRMGKTRIIAETGAGQHGVASATVAARFGLPCVVYMGATDVERQAPNVFRMKLLGAEVKPVTAGSGTLKDAMNEALRDWVTNVEDTYYLIGTAAGPHPYPEMVRDFQSVIGTEAKEQMLAAEGRLPDLVIAAVGGGSNAIGIFHPFLDDPTVKIVGVEAGGKGLQGDEHCASITAGSPGVLHGNRTYLLQDGDGQIKEGHSISAGLDYPGIGPEHSWLNDTGRVDYVPIMDHEALEAFQTLTRLEGIIPALEPSHAIAEVIKRAPKMGKDEIILMNLSGRGDKDIFTVGKILGMGL.

An N6-(pyridoxal phosphate)lysine modification is found at Lys-99.

This sequence belongs to the TrpB family. In terms of assembly, tetramer of two alpha and two beta chains. The cofactor is pyridoxal 5'-phosphate.

The enzyme catalyses (1S,2R)-1-C-(indol-3-yl)glycerol 3-phosphate + L-serine = D-glyceraldehyde 3-phosphate + L-tryptophan + H2O. It functions in the pathway amino-acid biosynthesis; L-tryptophan biosynthesis; L-tryptophan from chorismate: step 5/5. In terms of biological role, the beta subunit is responsible for the synthesis of L-tryptophan from indole and L-serine. This chain is Tryptophan synthase beta chain, found in Rhizobium leguminosarum bv. trifolii (strain WSM2304).